We begin with the raw amino-acid sequence, 260 residues long: 3'-5' ssDNA/RNA exonuclease TatD (260 aa).

3 residues coordinate a divalent metal cation: glutamate 91, histidine 127, and histidine 152.

It belongs to the metallo-dependent hydrolases superfamily. TatD-type hydrolase family. TatD subfamily. As to quaternary structure, monomer. Mg(2+) serves as cofactor.

Its subcellular location is the cytoplasm. Its function is as follows. 3'-5' exonuclease that prefers single-stranded DNA and RNA. May play a role in the H(2)O(2)-induced DNA damage repair. The chain is 3'-5' ssDNA/RNA exonuclease TatD from Enterobacter lignolyticus (strain SCF1).